The following is a 384-amino-acid chain: MYQSKKVLLLGSGELGKEVVIEAQRLGVQTVAVDSYEHAPAMQVAHNSYVVDMLDPEQIRTIIEKENPDLIVPEVEAIATDELLKLEEEGFHVIPNARAAKLTMDREGIRRLAAETLGLATAGYEFANTYDEFIQAAAQIGFPCVVKPLMSSSGKGQSVCRSEADLESCWETAMEGGRVKNGRVIVEEFIPFESEITLLTVRAVNGTAFCEPIGHVQKDGDYIESWQPHDMTEQQIEEAKHIAKTITDELGGYGLFGVELFLAKDRVYFSEVSPRPHDTGLVTLVTQNLSEFALHVRAILGFPITEITQLSPGASRPLKAPEELADYTVEGLENALAVPKTQVRVFGKPITKAGRRMAVALSAADSVETARENAKKALDQLILK.

N(1)-(5-phospho-beta-D-ribosyl)glycinamide is bound by residues Glu14–Leu15 and Glu74. ATP contacts are provided by residues Arg106, Lys147, Ser152–Gln157, Glu187–Ile190, and Glu195. One can recognise an ATP-grasp domain in the interval Arg111–Leu300. Mg(2+)-binding residues include Glu259 and Glu271. N(1)-(5-phospho-beta-D-ribosyl)glycinamide contacts are provided by residues Asp278, Lys348, and Arg355–Arg356.

Belongs to the PurK/PurT family. As to quaternary structure, homodimer.

The enzyme catalyses N(1)-(5-phospho-beta-D-ribosyl)glycinamide + formate + ATP = N(2)-formyl-N(1)-(5-phospho-beta-D-ribosyl)glycinamide + ADP + phosphate + H(+). It functions in the pathway purine metabolism; IMP biosynthesis via de novo pathway; N(2)-formyl-N(1)-(5-phospho-D-ribosyl)glycinamide from N(1)-(5-phospho-D-ribosyl)glycinamide (formate route): step 1/1. Catalyzes two reactions: the first one is the production of beta-formyl glycinamide ribonucleotide (GAR) from formate, ATP and beta GAR; the second, a side reaction, is the production of acetyl phosphate and ADP from acetate and ATP. Functionally, involved in the de novo purine biosynthesis. Catalyzes the transfer of formate to 5-phospho-ribosyl-glycinamide (GAR), producing 5-phospho-ribosyl-N-formylglycinamide (FGAR). Formate is provided by PurU via hydrolysis of 10-formyl-tetrahydrofolate. This is Formate-dependent phosphoribosylglycinamide formyltransferase from Bacillus subtilis (strain 168).